We begin with the raw amino-acid sequence, 209 residues long: MSTKSRTRSKTRLSRALGIPLTPKAAKYLEKRPYAPGEHGRSKRKQDSDYAVRLREKQRLRAQYGIREAQLKIAFQEARRTQGLTGENLVEILEQRLDALVVRSGLARTTAQARQLVVHRHIMVDGKIVDRPSFRVKAGQMIHVKPRSEGTEPFQVAAAGGHADVLPKLPSYLEVELDKLQARLVRLPKRAEVPVTCEVQLVVEYYAAR.

Residues 1–13 show a composition bias toward basic residues; that stretch reads MSTKSRTRSKTRL. Disordered regions lie at residues 1 to 20 and 28 to 49; these read MSTK…LGIP and YLEK…QDSD. Residues 95 to 176 enclose the S4 RNA-binding domain; the sequence is QRLDALVVRS…PKLPSYLEVE (82 aa).

It belongs to the universal ribosomal protein uS4 family. Part of the 30S ribosomal subunit. Contacts protein S5. The interaction surface between S4 and S5 is involved in control of translational fidelity.

Its function is as follows. One of the primary rRNA binding proteins, it binds directly to 16S rRNA where it nucleates assembly of the body of the 30S subunit. In terms of biological role, with S5 and S12 plays an important role in translational accuracy. In Clavibacter michiganensis subsp. michiganensis (strain NCPPB 382), this protein is Small ribosomal subunit protein uS4.